The primary structure comprises 365 residues: 3-dehydroquinate synthase (365 aa).

Residues 69-74, 103-107, 127-128, Lys140, and Lys149 contribute to the NAD(+) site; these read DGEAHK, GVIGD, and TT. Residues Glu182, His245, and His262 each coordinate Zn(2+).

This sequence belongs to the sugar phosphate cyclases superfamily. Dehydroquinate synthase family. Requires NAD(+) as cofactor. It depends on Co(2+) as a cofactor. The cofactor is Zn(2+).

The protein localises to the cytoplasm. The enzyme catalyses 7-phospho-2-dehydro-3-deoxy-D-arabino-heptonate = 3-dehydroquinate + phosphate. The protein operates within metabolic intermediate biosynthesis; chorismate biosynthesis; chorismate from D-erythrose 4-phosphate and phosphoenolpyruvate: step 2/7. Functionally, catalyzes the conversion of 3-deoxy-D-arabino-heptulosonate 7-phosphate (DAHP) to dehydroquinate (DHQ). This chain is 3-dehydroquinate synthase, found in Pseudomonas putida (strain ATCC 47054 / DSM 6125 / CFBP 8728 / NCIMB 11950 / KT2440).